A 37-amino-acid polypeptide reads, in one-letter code: Esculentin-2Rb (37 aa).

A disulfide bond links cysteine 31 and cysteine 37.

As to expression, expressed by the skin glands.

It localises to the secreted. Antimicrobial peptide. In Pelophylax ridibundus (Marsh frog), this protein is Esculentin-2Rb.